Consider the following 186-residue polypeptide: METFSSKDMALKAQKKILSKMATKSMVQMIIDDTSSEILDELYRVSKEYTGNRSEAQKVVKDLIKVVVKIGVLFRHNRFNEEELKLAQNFQKKLRQGAMTAISFHEVDFTFDKTVMSDILTESRDMLLKLVNTHLTTKSHGRINHVFNHYADPELLTQLYNSSGPLKPHLNKICNGLNKLLENGTL.

This sequence belongs to the TNFAIP8 family. TNFAIP8L2 subfamily.

Functionally, acts as a negative regulator of innate and adaptive immunity by maintaining immune homeostasis. Negative regulator of Toll-like receptor and T-cell receptor function. Prevents hyperresponsiveness of the immune system and maintains immune homeostasis. Inhibits jun/ap1 and NF-kappa-B activation. Promotes Fas-induced apoptosis. This is Tumor necrosis factor, alpha-induced protein 8-like protein 2 B (tnfaip8l2b) from Danio rerio (Zebrafish).